We begin with the raw amino-acid sequence, 241 residues long: Octanoyltransferase (241 aa).

The 189-residue stretch at 50–238 (KIAHEQVWLL…AFEQIFGPTI (189 aa)) folds into the BPL/LPL catalytic domain. Residues 89–96 (RGGEFTYH), 169–171 (AIG), and 182–184 (GIS) each bind substrate. C200 functions as the Acyl-thioester intermediate in the catalytic mechanism.

Belongs to the LipB family.

It is found in the cytoplasm. It carries out the reaction octanoyl-[ACP] + L-lysyl-[protein] = N(6)-octanoyl-L-lysyl-[protein] + holo-[ACP] + H(+). Its pathway is protein modification; protein lipoylation via endogenous pathway; protein N(6)-(lipoyl)lysine from octanoyl-[acyl-carrier-protein]: step 1/2. Catalyzes the transfer of endogenously produced octanoic acid from octanoyl-acyl-carrier-protein onto the lipoyl domains of lipoate-dependent enzymes. Lipoyl-ACP can also act as a substrate although octanoyl-ACP is likely to be the physiological substrate. This Bartonella bacilliformis (strain ATCC 35685 / KC583 / Herrer 020/F12,63) protein is Octanoyltransferase.